The chain runs to 1461 residues: Periaxin (1461 aa).

Serine 7 is subject to Phosphoserine. Positions 16 to 99 (LVEIIVETEA…YKVSFCLKRT (84 aa)) constitute a PDZ domain. Positions 70–84 (VFFENFKYEDALRLL) match the Nuclear export signal motif. Positions 118–196 (KGPRAKVAKL…RLQLPRLRVR (79 aa)) match the Nuclear localization signal motif. Residue serine 133 is modified to Phosphoserine. Tandem repeats lie at residues 431–435 (GPEVK), 439–443 (GPEVK), 447–451 (APEVK), 455–459 (VPEAA), 463–467 (VRLPE), 468–472 (VELPK), 473–477 (VSEMK), 481–485 (VPEMA), 486–490 (VPEVR), 494–498 (VELPK), 499–503 (VSEMK), 507–511 (VPEMA), 512–516 (VPEVR), 520–524 (VQLLK), 525–529 (VSEMK), 533–537 (VPEMA), 538–542 (VPEVR), 546–550 (VQLPK), 551–555 (VSEMK), 559–563 (VSEVA), 564–568 (VPEVR), 572–576 (VQLPK), 577–581 (VPEMK), 582–586 (VPEMK), 590–594 (VPEMK), 595–599 (LPEMK), 600–604 (LPEVQ), 608–612 (VPEMA), 613–617 (VPDVH), 618–622 (LPEVQ), 626–630 (VPEMK), 631–635 (LPEMK), 636–640 (LPEVK), 644–648 (VPEMA), 649–653 (VPDVH), 654–658 (LPEVQ), 662–666 (VPEMK), 670–674 (MPEMA), 675–679 (VPEVR), 683–687 (VQLPK), 688–692 (VSEMK), 696–700 (VPEMA), 701–705 (VPDVH), 706–710 (LPEVQ), 714–718 (VCEMK), 719–723 (VPDMK), 724–728 (LPEIK), 732–736 (VPEMA), 737–741 (VPDVH), 742–746 (LPEVQ), 750–754 (VSEIR), 755–759 (LPEMQ), 760–764 (VPKVP), 771–775 (APEVK), and 779–783 (APEVQ). The tract at residues 431 to 783 (GPEVKVPKGP…VKLPRAPEVQ (353 aa)) is 55 X 5 AA approximate tandem repeats of [LVMAG]-[PSREQC]-[EDKL]-[LIVMAP]-[AQKHRPE]; that may have a tripeptide spacer of [LV]-P-[KER]. Residues serine 900 and serine 1082 each carry the phosphoserine modification. Over residues 1318–1327 (EGAEEGEKAK) the composition is skewed to basic and acidic residues. The interval 1318 to 1461 (EGAEEGEKAK…RMEGAQAAAV (144 aa)) is disordered. Phosphoserine is present on residues serine 1349, serine 1351, serine 1363, serine 1401, serine 1407, and serine 1439. Residues 1352–1363 (PEEEEEEEEEGS) are compositionally biased toward acidic residues.

The protein belongs to the periaxin family. Homodimer (via PDZ domain). Interacts with SCN10A. Found in a complex with SCN10A. Interacts with DRP2. Identified in a dystroglycan complex that contains at least PRX, DRP2, UTRN, DMD and DAG1. Detected in a complex composed of at least EZR, AHNAK, PPL and PRX. Identified in a complex with EZR, AHNAK, BFSP1, BFSP2, ANK2, PLEC, VIM and spectrin. In terms of tissue distribution, detected in spinal cord. Isoform 1 and isoform 2 are found in sciatic nerve and Schwann cells.

The protein localises to the cell membrane. It localises to the nucleus. It is found in the cytoplasm. Its subcellular location is the cell junction. Scaffolding protein that functions as part of a dystroglycan complex in Schwann cells, and as part of EZR and AHNAK-containing complexes in eye lens fiber cells. Required for the maintenance of the peripheral myelin sheath that is essential for normal transmission of nerve impulses and normal perception of sensory stimuli. Required for normal transport of MBP mRNA from the perinuclear to the paranodal regions. Required for normal remyelination after nerve injury. Required for normal elongation of Schwann cells and normal length of the internodes between the nodes of Ranvier. The demyelinated nodes of Ranvier permit saltatory transmission of nerve impulses; shorter internodes cause slower transmission of nerve impulses. Required for the formation of appositions between the abaxonal surface of the myelin sheath and the Schwann cell plasma membrane; the Schwann cell cytoplasm is restricted to regions between these appositions. Required for the formation of Cajal bands and of Schmidt-Lanterman incisures that correspond to short, cytoplasm-filled regions on myelinated nerves. Recruits DRP2 to the Schwann cell plasma membrane. Required for normal protein composition of the eye lens fiber cell plasma membrane and normal eye lens fiber cell morphology. The sequence is that of Periaxin (PRX) from Homo sapiens (Human).